A 290-amino-acid chain; its full sequence is 4-hydroxybenzoate octaprenyltransferase (290 aa).

9 helical membrane passes run 20–40, 43–63, 92–112, 114–131, 135–155, 160–180, 209–229, 231–251, and 266–286; these read IGIL…AEGV, LDIL…GCVV, EALL…QPLN, LTIE…SYPF, FFAM…PMAF, GEVP…VIAY, VVGV…IGLL, NLGV…LYQY, and FLHN…DYLV.

It belongs to the UbiA prenyltransferase family. Mg(2+) is required as a cofactor.

The protein localises to the cell inner membrane. The catalysed reaction is all-trans-octaprenyl diphosphate + 4-hydroxybenzoate = 4-hydroxy-3-(all-trans-octaprenyl)benzoate + diphosphate. The protein operates within cofactor biosynthesis; ubiquinone biosynthesis. Catalyzes the prenylation of para-hydroxybenzoate (PHB) with an all-trans polyprenyl group. Mediates the second step in the final reaction sequence of ubiquinone-8 (UQ-8) biosynthesis, which is the condensation of the polyisoprenoid side chain with PHB, generating the first membrane-bound Q intermediate 3-octaprenyl-4-hydroxybenzoate. This chain is 4-hydroxybenzoate octaprenyltransferase, found in Nitrosospira multiformis (strain ATCC 25196 / NCIMB 11849 / C 71).